Reading from the N-terminus, the 463-residue chain is MASMAAVLSKTPFLSQPLTKSSPNSDLPFAAVSFPSKSLRRRVGSIRAGLIAPDGGKLVELIVEEPKRREKKHEAADLPRVELTAIDLQWMHVLSEGWASPLGGFMRESEFLQTLHFNSLRLDDGSVVNMSVPIVLAIDDEQKARIGESTRVALFNSDGNPVAILSDIEIYKHPKEERIARTWGTTAPGLPYVDEAITNAGNWLIGGDLEVLEPVKYNDGLDRFRLSPAELRKELEKRNADAVFAFQLRNPVHNGHALLMTDTRRRLLEMGYKNPILLLHPLGGFTKADDVPLDWRMKQHEKVLEDGVLDPETTVVSIFPSPMHYAGPTEVQWHAKARINAGANFYIVGRDPAGMGHPVEKRDLYDADHGKKVLSMAPGLERLNILPFRVAAYDKTQGKMAFFDPSRPQDFLFISGTKMRTLAKNNENPPDGFMCPGGWKVLVDYYESLTPAGNGRLPEVVPV.

The transit peptide at 1–48 directs the protein to the chloroplast; that stretch reads MASMAAVLSKTPFLSQPLTKSSPNSDLPFAAVSFPSKSLRRRVGSIRA.

It belongs to the sulfate adenylyltransferase family. Homotetramer.

The protein localises to the plastid. It is found in the chloroplast stroma. It carries out the reaction sulfate + ATP + H(+) = adenosine 5'-phosphosulfate + diphosphate. Its pathway is sulfur metabolism; hydrogen sulfide biosynthesis; sulfite from sulfate: step 1/3. Its function is as follows. Mediates selenate (Se) reduction, and promotes Se and sulfur (S) uptake and assimilation. This chain is ATP sulfurylase 1, chloroplastic (APS1), found in Arabidopsis thaliana (Mouse-ear cress).